Consider the following 345-residue polypeptide: Arginine-hydroxylase NDUFAF5, mitochondrial (345 aa).

The transit peptide at 1–36 directs the protein to the mitochondrion; sequence MLRPAGLWRLCRRPWAARVPAENLGRREVTSGVSPR.

Belongs to the methyltransferase superfamily. Interacts with NDUFAF8, leading to stabilize NDUFAF5. Interacts with NDUFS7. Interacts with PYURF (via TRM112 domain); the interaction is direct and stabilizes NDUFAF5 protein.

The protein resides in the mitochondrion inner membrane. Its function is as follows. Arginine hydroxylase that mediates hydroxylation of 'Arg-111' of NDUFS7 and is involved in the assembly of mitochondrial NADH:ubiquinone oxidoreductase complex (complex I, MT-ND1) at early stages. May also have methyltransferase activity. In Homo sapiens (Human), this protein is Arginine-hydroxylase NDUFAF5, mitochondrial.